A 270-amino-acid polypeptide reads, in one-letter code: Complement factor H-related protein 2 (270 aa).

Residues 1-18 (MWLLVSVILISRISSVGG) form the signal peptide. Sushi domains lie at 22–84 (FCDF…PKCL), 85–142 (RLCF…KCRS), 147–205 (EKCG…KCLD), and 206–268 (PCVI…PSCE). Intrachain disulfides connect cysteine 23–cysteine 72, cysteine 55–cysteine 83, cysteine 87–cysteine 129, cysteine 114–cysteine 140, cysteine 149–cysteine 192, cysteine 178–cysteine 203, cysteine 207–cysteine 257, and cysteine 241–cysteine 267. An N-linked (GlcNAc...) asparagine glycan is attached at asparagine 126.

Head-to-tail homodimer and heterodimer with CFHR1 or CFHR5. N-glycosylated. As to expression, expressed by the liver and secreted in plasma.

The protein localises to the secreted. In terms of biological role, involved in complement regulation. The dimerized forms have avidity for tissue-bound complement fragments and efficiently compete with the physiological complement inhibitor CFH. Can associate with lipoproteins and may play a role in lipid metabolism. The polypeptide is Complement factor H-related protein 2 (CFHR2) (Homo sapiens (Human)).